Here is a 483-residue protein sequence, read N- to C-terminus: 6-phosphogluconate dehydrogenase, decarboxylating 1 (483 aa).

NADP(+) contacts are provided by residues 11–16 (GLAVMG), 34–36 (NRT), 78–80 (VKA), and Asn106. Residues Asn106 and 132–134 (SGG) contribute to the substrate site. Lys186 (proton acceptor) is an active-site residue. A substrate-binding site is contributed by 189 to 190 (HN). The Proton donor role is filled by Glu193. Residues Tyr194, Lys264, Arg291, Arg454, and His460 each coordinate substrate.

It belongs to the 6-phosphogluconate dehydrogenase family. As to quaternary structure, homodimer.

It localises to the cytoplasm. The catalysed reaction is 6-phospho-D-gluconate + NADP(+) = D-ribulose 5-phosphate + CO2 + NADPH. Its pathway is carbohydrate degradation; pentose phosphate pathway; D-ribulose 5-phosphate from D-glucose 6-phosphate (oxidative stage): step 3/3. Catalyzes the oxidative decarboxylation of 6-phosphogluconate to ribulose 5-phosphate and CO(2), with concomitant reduction of NADP to NADPH. This chain is 6-phosphogluconate dehydrogenase, decarboxylating 1 (pgdC), found in Spinacia oleracea (Spinach).